We begin with the raw amino-acid sequence, 44 residues long: Non-structural protein 7b (44 aa).

Residues 9–29 (FYLCFLAFLLFLVLIMLLIFW) form a helical membrane-spanning segment.

Its subcellular location is the host membrane. The polypeptide is Non-structural protein 7b (Bat coronavirus HKU3 (BtCoV)).